Reading from the N-terminus, the 158-residue chain is Sec-independent protein translocase protein TatB (158 aa).

The chain crosses the membrane as a helical span at residues 1–21; it reads MFDIGWSELLVIGVVALVVVG. The tract at residues 73–158 is disordered; that stretch reads RSMGLDAMKQ…PAPAEPKSNA (86 aa). Residues 83 to 92 are compositionally biased toward basic and acidic residues; that stretch reads AADRFEKWDP. Composition is skewed to low complexity over residues 94-132 and 138-158; these read KPQQGAPKPAAPASSIPAAKAQQGAGAAAVTAPPASEPA and APAAAAPEAASPAPAEPKSNA.

The protein belongs to the TatB family. As to quaternary structure, the Tat system comprises two distinct complexes: a TatABC complex, containing multiple copies of TatA, TatB and TatC subunits, and a separate TatA complex, containing only TatA subunits. Substrates initially bind to the TatABC complex, which probably triggers association of the separate TatA complex to form the active translocon.

Its subcellular location is the cell inner membrane. Part of the twin-arginine translocation (Tat) system that transports large folded proteins containing a characteristic twin-arginine motif in their signal peptide across membranes. Together with TatC, TatB is part of a receptor directly interacting with Tat signal peptides. TatB may form an oligomeric binding site that transiently accommodates folded Tat precursor proteins before their translocation. The sequence is that of Sec-independent protein translocase protein TatB from Cereibacter sphaeroides (strain ATCC 17029 / ATH 2.4.9) (Rhodobacter sphaeroides).